Consider the following 567-residue polypeptide: MAEDSAGLPSNYQFWMQKLSVWTQASTLETQRDICLHLPQFQEFLRRMYETLKEMDSNAIIERFPTICQLLAKSCWSPFILAYDESPKILIWCLCCLIKKDPQNSRESKLNSWTRRLLSHIVSTSRFDIKEVGLFNQVLGYAPTDYYPGLLKNMVLSLVSELRENHLNGFSSQRRCPERVRSLSRDRVPLLTLPDFEPLVEALLTYHGHEPQEVLCPEFFDAVNEASLLKKISLPTSAILCLWLRHLPSLENTMLHLLEKLISSERNSLRRIKCFMKDSLRPEAAACHPAIFRVVDEIFRSALLETDGAPEVLAGLQVFTRCFVEALEKENKQLKFALKTYFPYASPALVMVLLQHPKDIPQGLWHQSLKHISEMLKEIVEDHGSYGGPFESWFLFVHFGGWADITAEQLLMSEAEAEPPEALLWLLAFSCSPGAGHQQRARTMVEVKTVLGCLTKLFRSPALSARDLQAAAGENLGGDPRPPACQQLVRRLLLHFLLWAPGGHTIAREVITLMAQTDAIMNEIIGFLDYTLYRWDHLCVEAHRSRKLARELLTELREQALPGQVNQ.

In terms of assembly, belongs to the multisubunit FA complex composed of FANCA, FANCB, FANCC, FANCE, FANCF, FANCG, FANCL/PHF9 and FANCM. This complex may also include HSP70. Interacts with ZBTB32. Upon IFNG induction, interacts with STAT1. Interacts with CDK1. Interacts with EIF2AK2.

The protein localises to the nucleus. The protein resides in the cytoplasm. In terms of biological role, DNA repair protein that may operate in a postreplication repair or a cell cycle checkpoint function. May be implicated in interstrand DNA cross-link repair and in the maintenance of normal chromosome stability. Upon IFNG induction, may facilitate STAT1 activation by recruiting STAT1 to IFNGR1. The polypeptide is Fanconi anemia group C protein homolog (FANCC) (Bos taurus (Bovine)).